A 142-amino-acid polypeptide reads, in one-letter code: Transcriptional regulator MraZ (142 aa).

SpoVT-AbrB domains are found at residues 5–47 (THTP…PTPE) and 76–119 (AHDE…DRVA).

Belongs to the MraZ family. As to quaternary structure, forms oligomers.

It is found in the cytoplasm. Its subcellular location is the nucleoid. This Salinispora tropica (strain ATCC BAA-916 / DSM 44818 / JCM 13857 / NBRC 105044 / CNB-440) protein is Transcriptional regulator MraZ.